We begin with the raw amino-acid sequence, 552 residues long: Urocanate hydratase (552 aa).

Residues 49–50 (GG), glutamine 127, 173–175 (GMG), aspartate 193, 239–240 (NA), 260–264 (QTSAH), 270–271 (YI), and tyrosine 319 each bind NAD(+). Cysteine 407 is an active-site residue. Residue glycine 489 coordinates NAD(+).

It belongs to the urocanase family. NAD(+) serves as cofactor.

It localises to the cytoplasm. It catalyses the reaction 4-imidazolone-5-propanoate = trans-urocanate + H2O. It participates in amino-acid degradation; L-histidine degradation into L-glutamate; N-formimidoyl-L-glutamate from L-histidine: step 2/3. Functionally, catalyzes the conversion of urocanate to 4-imidazolone-5-propionate. In Bacillus thuringiensis (strain Al Hakam), this protein is Urocanate hydratase.